The following is a 365-amino-acid chain: L-lactate oxidase (365 aa).

In terms of domain architecture, FMN hydroxy acid dehydrogenase spans 6-365 (RIPPGVWNAI…ITHDTLTPSC (360 aa)). Y32 contributes to the pyruvate binding site. FMN-binding positions include 85–87 (PVA), S114, and Q135. Y137 is a binding site for pyruvate. 3 residues coordinate FMN: T163, K237, and S259. Residues H261 and R264 each coordinate pyruvate. The active-site Proton acceptor is H261. FMN is bound by residues 292–296 (DGGVR) and R316.

It belongs to the FMN-dependent alpha-hydroxy acid dehydrogenase family. As to quaternary structure, homotetramer. It depends on FMN as a cofactor.

It carries out the reaction (S)-lactate + O2 = pyruvate + H2O2. The catalysed reaction is glycolate + O2 = glyoxylate + H2O2. In terms of biological role, catalyzes the oxidation of (S)-lactate (L-lactate) to pyruvate, with a reduction of O2 to H2O2. To a lesser extent is also able to use glycolate as substrate. The polypeptide is L-lactate oxidase (Alicycliphilus denitrificans (strain DSM 14773 / CIP 107495 / K601)).